The following is a 318-amino-acid chain: Ribose-phosphate pyrophosphokinase 1 (318 aa).

ATP is bound by residues 43–45 (DGE) and 102–103 (RQ). Residues His136 and Asp176 each coordinate Mg(2+). The active site involves Lys199. D-ribose 5-phosphate is bound by residues Arg201, Asp225, and 229–233 (DTAGT).

It belongs to the ribose-phosphate pyrophosphokinase family. Class I subfamily. As to quaternary structure, homohexamer. The cofactor is Mg(2+).

Its subcellular location is the cytoplasm. The enzyme catalyses D-ribose 5-phosphate + ATP = 5-phospho-alpha-D-ribose 1-diphosphate + AMP + H(+). It functions in the pathway metabolic intermediate biosynthesis; 5-phospho-alpha-D-ribose 1-diphosphate biosynthesis; 5-phospho-alpha-D-ribose 1-diphosphate from D-ribose 5-phosphate (route I): step 1/1. Involved in the biosynthesis of the central metabolite phospho-alpha-D-ribosyl-1-pyrophosphate (PRPP) via the transfer of pyrophosphoryl group from ATP to 1-hydroxyl of ribose-5-phosphate (Rib-5-P). This is Ribose-phosphate pyrophosphokinase 1 from Listeria monocytogenes serotype 4b (strain F2365).